Here is a 289-residue protein sequence, read N- to C-terminus: Glyoxylate/succinic semialdehyde reductase 1 (289 aa).

N-acetylmethionine is present on Met1. NADP(+)-binding positions include 4–18 (GFLG…MSMN) and Thr95. Lys170 is a catalytic residue. Lys238 is a binding site for NADP(+).

Belongs to the HIBADH-related family. NP60 subfamily.

The protein localises to the cytoplasm. It localises to the cytosol. The catalysed reaction is glycolate + NADP(+) = glyoxylate + NADPH + H(+). The enzyme catalyses 4-hydroxybutanoate + NADP(+) = succinate semialdehyde + NADPH + H(+). Its activity is regulated as follows. The ratio of NADPH/NADP(+) may regulate enzymatic activity. Catalyzes the NADPH-dependent reduction of glyoxylate to glycolate as well as succinic semialdehyde (SSA) to gamma-hydroxybutyrate in vitro. May function in redox homeostasis and play a role in oxidative stress tolerance by detoxifying glyoxylate and SSA generated in glycolate metabolism and GABA metabolism, respectively. This Arabidopsis thaliana (Mouse-ear cress) protein is Glyoxylate/succinic semialdehyde reductase 1 (GLYR1).